The following is a 1441-amino-acid chain: Envelopment polyprotein (1441 aa).

An N-terminal signal peptide occupies residues 1–13 (MIRMLVLIVVTAA). The Lumenal segment spans residues 14–200 (SPVYQRCFQD…GSIANSICQN (187 aa)). Asparagine 57 is a glycosylation site (N-linked (GlcNAc...) asparagine; by host). Residues 201–221 (IEIIILVTLTLLIFILLSILS) traverse the membrane as a helical segment. At 222–305 (KTYICYLLMP…RAARVMCKSK (84 aa)) the chain is on the cytoplasmic side. Residues 306–326 (GPASILSIITAVLVLTFVTPI) form a helical membrane-spanning segment. The Lumenal segment spans residues 327 to 365 (NSMVLGESKETFELEELPDDMLEMALRINSYYFTCILNY). Residues 366–386 (AVSWGLIIAGLLVGLIFKKYQ) traverse the membrane as a helical segment. The Cytoplasmic segment spans residues 387–452 (HRFLNIYAMY…LVQYKAKWMM (66 aa)). A helical transmembrane segment spans residues 453 to 473 (NFLIIYIFLILIKDSAIVGQA). Residues 474–1395 (TGTDFTTCLE…EPFKNLFGSY (922 aa)) are Lumenal-facing. Residues asparagine 490 and asparagine 1177 are each glycosylated (N-linked (GlcNAc...) asparagine; by host). The helical transmembrane segment at 1396-1416 (IGIFYTFIISIIALLVIIYVL) threads the bilayer. Residues 1417–1441 (LPICFKLRDTLRKHDDAYKREMKIR) are Cytoplasmic-facing.

The protein belongs to the orthobunyavirus envelope glycoprotein family. In terms of assembly, glycoprotein C and Glycoprotein N interact with each other. Specific enzymatic cleavages in vivo yield mature proteins including nonstructural protein NSm, glycoprotein C, and glycoprotein N.

It localises to the virion membrane. It is found in the host Golgi apparatus membrane. Its subcellular location is the host endoplasmic reticulum membrane. Its function is as follows. Glycoprotein C and Glycoprotein N interact with each other and are present at the surface of the virion. They are able to attach the virion to a cell receptor and to promote fusion of membranes after endocytosis of the virion. The sequence is that of Envelopment polyprotein (GP) from Bunyavirus La Crosse.